The following is a 182-amino-acid chain: Peptidyl-prolyl cis-trans isomerase H (182 aa).

The region spanning Phe-15 to Glu-181 is the PPIase cyclophilin-type domain.

This sequence belongs to the cyclophilin-type PPIase family. PPIase H subfamily.

The protein localises to the nucleus. The enzyme catalyses [protein]-peptidylproline (omega=180) = [protein]-peptidylproline (omega=0). PPIases accelerate the folding of proteins. It catalyzes the cis-trans isomerization of proline imidic peptide bonds in oligopeptides. The protein is Peptidyl-prolyl cis-trans isomerase H (CYP3) of Gibberella zeae (strain ATCC MYA-4620 / CBS 123657 / FGSC 9075 / NRRL 31084 / PH-1) (Wheat head blight fungus).